The following is a 61-amino-acid chain: U-stichotoxin-Hcr1a (61 aa).

A signal peptide spans 1–21 (MKPAIFLMLFVAMFLISEGEG). Positions 22–31 (FKPKDAPQER) are excised as a propeptide. At proline 36 the chain carries Hydroxyproline. Intrachain disulfides connect cysteine 41–cysteine 53 and cysteine 44–cysteine 59.

Belongs to the Hau1a/HC18/HC19 family.

It is found in the secreted. It localises to the nematocyst. In terms of biological role, toxin that is lethal to crab. Does not produce the typical symptoms associated with sodium channel toxins in crabs, suggesting that it likely does not act on sodium channels. The chain is U-stichotoxin-Hcr1a from Radianthus crispa (Leathery sea anemone).